The primary structure comprises 308 residues: Ribosomal RNA small subunit methyltransferase H (308 aa).

S-adenosyl-L-methionine-binding positions include 31-33 (GGH), Asp-51, Phe-75, Asp-97, and Gln-104.

It belongs to the methyltransferase superfamily. RsmH family.

The protein localises to the cytoplasm. It carries out the reaction cytidine(1402) in 16S rRNA + S-adenosyl-L-methionine = N(4)-methylcytidine(1402) in 16S rRNA + S-adenosyl-L-homocysteine + H(+). In terms of biological role, specifically methylates the N4 position of cytidine in position 1402 (C1402) of 16S rRNA. The sequence is that of Ribosomal RNA small subunit methyltransferase H from Tolumonas auensis (strain DSM 9187 / NBRC 110442 / TA 4).